Here is a 65-residue protein sequence, read N- to C-terminus: Large ribosomal subunit protein bL35 (65 aa).

This sequence belongs to the bacterial ribosomal protein bL35 family.

This Aeromonas hydrophila subsp. hydrophila (strain ATCC 7966 / DSM 30187 / BCRC 13018 / CCUG 14551 / JCM 1027 / KCTC 2358 / NCIMB 9240 / NCTC 8049) protein is Large ribosomal subunit protein bL35.